The following is a 160-amino-acid chain: MKVCSIVVVILAVLLIAKLDAKIYERCELAKKLEEAGLDGFKGYTVGDWLCVAHYESGFDTSFVDHNPDGSSEYGIFQLNSAWWCNNGITPTQNLCNIDCNDLLNRHILDDIICAKRVASSHKSMKAWDSWTQHCAGHDLSEWLKGCSVRLKTDSSYNNW.

Residues 1–21 (MKVCSIVVVILAVLLIAKLDA) form the signal peptide. The C-type lysozyme domain occupies 22–150 (KIYERCELAK…SEWLKGCSVR (129 aa)). 4 disulfide bridges follow: C27–C147, C51–C135, C85–C100, and C96–C114. E56 is a catalytic residue.

The protein belongs to the glycosyl hydrolase 22 family.

It is found in the secreted. The enzyme catalyses Hydrolysis of (1-&gt;4)-beta-linkages between N-acetylmuramic acid and N-acetyl-D-glucosamine residues in a peptidoglycan and between N-acetyl-D-glucosamine residues in chitodextrins.. This is Sperm acrosome-associated protein 5 (Spaca5) from Mus musculus (Mouse).